Consider the following 675-residue polypeptide: MSELDLEENNPLLPPSQINDENYEGSIFGEDARFCPNSRQVFRICSNLKLLIDKIIPICFKEDEITSSNSAILSDPVIDLVYQAAGGKGDGKEGTSSYKYRGSLVFCLLKVCDWYWQQAEFELSDNELYSLRALTAQTIAAIIIEREKRDKYLFLNMLCHRYTICVNGVDATPVSALEMAVDMHSTIVIGSSGYQRCIKWLWRGWIIQSSTDPHSYVLYKGAASQSFRTHFDPARIKTPLYQNILEIFLSIIYLIIFTIVVNTHSTLTGDIDFFETVLYLFTVGYILDEFIKFYHVGWNYLGFWNAFNDTMYCILTVAVCFRIASVNSHGATRIKYDEISFRVLACASPLMWSRLLLFLDAYKFVGAMIVVLKTMMKESILFFFLLFVVIVGFLQGFIGLDSSDGKNEATQRILISLVKAVIGGSSFEDMGNLVPPYASVLYYFYQFMLTVILMNILIALYSTAYAAIVENATDEYFALVAHKTLRYIRAPDQNLYVPPFNLIELLITPIGWFVSTSTWKNINYYVMLVIYSPLLAYITSDELSNARRIQYNRFKGVPDDANEIDTEWDLTDGYDEDSPGDGDDCWDRIRERNSEITEELRIQREGERQDPEFMINTHQFSEKIDKIVKPVGQASKVGVNWQIYEVIEKIDKLTNLLEVVVAENKELKKRLENKA.

The next 8 membrane-spanning stretches (helical) occupy residues 244-264 (ILEI…VNTH), 271-291 (IDFF…DEFI), 301-321 (LGFW…AVCF), 355-375 (LLLF…LKTM), 380-400 (ILFF…FIGL), 440-460 (VLYY…LIAL), 495-515 (LYVP…WFVS), and 518-538 (TWKN…LAYI). Positions 644–675 (YEVIEKIDKLTNLLEVVVAENKELKKRLENKA) form a coiled coil.

It belongs to the transient receptor (TC 1.A.4) family.

Its subcellular location is the vacuole membrane. In terms of biological role, vacuolar calcium channel involved in the release of calcium ions from the vacuole in response to hyperosmotic or alkaline stress. Required for activation of CAP1-related transcription of oxidative stress response (OSR) genes, but also for maintaining the stability of both the mitochondria and the vacuole in a potassium- and calcium-dependent manner. Contributes to pathogenicity. Plays a key role in hyphal polarized growth and re-orientation to host-signals through its contribution to the localization of the Spitzenkoerper to the hyphal tips. The protein is Calcium channel YVC1 (YVC1) of Candida albicans (strain SC5314 / ATCC MYA-2876) (Yeast).